Reading from the N-terminus, the 311-residue chain is HPr kinase/phosphorylase (311 aa).

Residues H138 and K159 contribute to the active site. 153 to 160 (GDSGIGKS) is an ATP binding site. A Mg(2+)-binding site is contributed by S160. Catalysis depends on D177, which acts as the Proton acceptor; for phosphorylation activity. Proton donor; for dephosphorylation activity. Residues 201–210 (IEIRGVGIID) form an important for the catalytic mechanism of both phosphorylation and dephosphorylation region. Residue E202 coordinates Mg(2+). The active site involves R243. Positions 264–269 (PVKTGR) are important for the catalytic mechanism of dephosphorylation.

It belongs to the HPrK/P family. Homohexamer. Requires Mg(2+) as cofactor.

It catalyses the reaction [HPr protein]-L-serine + ATP = [HPr protein]-O-phospho-L-serine + ADP + H(+). It carries out the reaction [HPr protein]-O-phospho-L-serine + phosphate + H(+) = [HPr protein]-L-serine + diphosphate. Functionally, catalyzes the ATP- as well as the pyrophosphate-dependent phosphorylation of a specific serine residue in HPr, a phosphocarrier protein of the phosphoenolpyruvate-dependent sugar phosphotransferase system (PTS). HprK/P also catalyzes the pyrophosphate-producing, inorganic phosphate-dependent dephosphorylation (phosphorolysis) of seryl-phosphorylated HPr (P-Ser-HPr). The two antagonistic activities of HprK/P are regulated by several intracellular metabolites, which change their concentration in response to the absence or presence of rapidly metabolisable carbon sources (glucose, fructose, etc.) in the growth medium. Therefore, by controlling the phosphorylation state of HPr, HPrK/P is a sensor enzyme that plays a major role in the regulation of carbon metabolism and sugar transport: it mediates carbon catabolite repression (CCR), and regulates PTS-catalyzed carbohydrate uptake and inducer exclusion. The protein is HPr kinase/phosphorylase of Streptococcus pneumoniae (strain 70585).